The sequence spans 146 residues: Phage-like element PBSX protein XkdJ (146 aa).

The protein to B.subtilis YqbJ.

This Bacillus subtilis (strain 168) protein is Phage-like element PBSX protein XkdJ (xkdJ).